Here is a 95-residue protein sequence, read N- to C-terminus: Small ribosomal subunit protein bS6 (95 aa).

Belongs to the bacterial ribosomal protein bS6 family.

Functionally, binds together with bS18 to 16S ribosomal RNA. In Nocardia farcinica (strain IFM 10152), this protein is Small ribosomal subunit protein bS6.